Reading from the N-terminus, the 48-residue chain is Cytochrome c oxidase subunit 2 (48 aa).

At 1 to 14 (MAHPAQLGLQDASS) the chain is on the mitochondrial intermembrane side. The chain crosses the membrane as a helical span at residues 15–45 (PIXEELLHFHEDALMIVFLISTLVLYIITTT). Over 46 to 48 (VST) the chain is Mitochondrial matrix.

It belongs to the cytochrome c oxidase subunit 2 family. In terms of assembly, component of the cytochrome c oxidase (complex IV, CIV), a multisubunit enzyme composed of 14 subunits. The complex is composed of a catalytic core of 3 subunits MT-CO1, MT-CO2 and MT-CO3, encoded in the mitochondrial DNA, and 11 supernumerary subunits COX4I, COX5A, COX5B, COX6A, COX6B, COX6C, COX7A, COX7B, COX7C, COX8 and NDUFA4, which are encoded in the nuclear genome. The complex exists as a monomer or a dimer and forms supercomplexes (SCs) in the inner mitochondrial membrane with NADH-ubiquinone oxidoreductase (complex I, CI) and ubiquinol-cytochrome c oxidoreductase (cytochrome b-c1 complex, complex III, CIII), resulting in different assemblies (supercomplex SCI(1)III(2)IV(1) and megacomplex MCI(2)III(2)IV(2)). Found in a complex with TMEM177, COA6, COX18, COX20, SCO1 and SCO2. Interacts with TMEM177 in a COX20-dependent manner. Interacts with COX20. Interacts with COX16. Cu cation serves as cofactor.

The protein resides in the mitochondrion inner membrane. It catalyses the reaction 4 Fe(II)-[cytochrome c] + O2 + 8 H(+)(in) = 4 Fe(III)-[cytochrome c] + 2 H2O + 4 H(+)(out). Component of the cytochrome c oxidase, the last enzyme in the mitochondrial electron transport chain which drives oxidative phosphorylation. The respiratory chain contains 3 multisubunit complexes succinate dehydrogenase (complex II, CII), ubiquinol-cytochrome c oxidoreductase (cytochrome b-c1 complex, complex III, CIII) and cytochrome c oxidase (complex IV, CIV), that cooperate to transfer electrons derived from NADH and succinate to molecular oxygen, creating an electrochemical gradient over the inner membrane that drives transmembrane transport and the ATP synthase. Cytochrome c oxidase is the component of the respiratory chain that catalyzes the reduction of oxygen to water. Electrons originating from reduced cytochrome c in the intermembrane space (IMS) are transferred via the dinuclear copper A center (CU(A)) of subunit 2 and heme A of subunit 1 to the active site in subunit 1, a binuclear center (BNC) formed by heme A3 and copper B (CU(B)). The BNC reduces molecular oxygen to 2 water molecules using 4 electrons from cytochrome c in the IMS and 4 protons from the mitochondrial matrix. This is Cytochrome c oxidase subunit 2 (mt-co2) from Polypterus sp. (Bichir).